A 440-amino-acid polypeptide reads, in one-letter code: Phenylacetate-coenzyme A ligase (440 aa).

The protein belongs to the phenylacetyl-CoA ligase family. In terms of assembly, monomer.

The catalysed reaction is 2-phenylacetate + ATP + CoA = phenylacetyl-CoA + AMP + diphosphate. It participates in aromatic compound metabolism; phenylacetate degradation. Inhibition of activity is observed in the presence of a 1 mM of the divalent cations zinc, copper, and nickel. Catalyzes the activation of phenylacetic acid (PA) to phenylacetyl-CoA (PA-CoA). Involved in the phenylalanine metabolism. This is Phenylacetate-coenzyme A ligase (paaK) from Aromatoleum evansii (Azoarcus evansii).